A 102-amino-acid chain; its full sequence is Large ribosomal subunit protein P1 (102 aa).

The segment at 69-91 is disordered; the sequence is APAAAAEEKKEEEKKEEKKEEDT. Basic and acidic residues predominate over residues 74 to 90; it reads AEEKKEEEKKEEKKEED.

The protein belongs to the eukaryotic ribosomal protein P1/P2 family. In terms of assembly, part of the 50S ribosomal subunit. Homodimer, it forms part of the ribosomal stalk which helps the ribosome interact with GTP-bound translation factors. Forms a heptameric uL10/P0(P1)2(P1)2(P1)2 complex, where uL10/P0 forms an elongated spine to which the P1 dimers bind in a sequential fashion.

Forms part of the ribosomal stalk, playing a central role in the interaction of the ribosome with GTP-bound translation factors. The chain is Large ribosomal subunit protein P1 from Methanocaldococcus jannaschii (strain ATCC 43067 / DSM 2661 / JAL-1 / JCM 10045 / NBRC 100440) (Methanococcus jannaschii).